A 372-amino-acid polypeptide reads, in one-letter code: MAGKSQMVEAFGWAARDTSGVLYPFKFLRRATGERDVQFKVLYCGMCDWDMTVLKNGFGTTTYPVVPGHEIVGVVTEVGSKVQKFKVGDTVGVGTLVGSCRTCKKCKHDLEQYCHSYLMADGACYSYGNTICGDMSTRVYGGYSDIMVVDEYFAIVWPAKNYPLAAGAPLLCGGIVAYSAIRYYGLDKPGMHIGIVGLGGIGRMAVKFAKAFGAKVTVISTSINKKQEALEKFGADSFLYSKDPQEMEAAVDTLDAIIDTAPKFHPIVPLINLLKFEGKLILLGAVEESYELPASPLIVERKMVAGSASGGVKEIQEMMDFAAKHNIVAEIEIIPIDYVNTAIGRIEKGDAKDRFVIDIANTLKSGEDINSS.

Positions 47, 50, 69, 70, 100, 103, 106, 114, and 172 each coordinate Zn(2+). NADP(+) is bound by residues 197 to 202, K226, 283 to 285, S307, and R354; these read GLGGIG and LGA.

Belongs to the zinc-containing alcohol dehydrogenase family. As to quaternary structure, homodimer. The cofactor is Zn(2+).

It carries out the reaction (19E)-cur-19-en-17-al + NADP(+) = norfluorocurarine + NADPH + H(+). It catalyses the reaction 17,18-epoxy-17-hydroxycur-19-ene + NADP(+) = 18-hydroxynorfluorocurarine + NADPH + H(+). It functions in the pathway alkaloid biosynthesis. Its function is as follows. Alcohol dehydrogenase involved in the biosynthesis of curare monoterpene indole alkaloids (MIAs), natural products such as diaboline, a pharmacologically active compound used to regulate blood pressure. Curare alkaloids act as animal glycine receptor antagonists. Catalyzes the conversion of norfluorocurarine to desoxy Wieland-Gumlich aldehyde, and of 18-OH norfluorocurarine to Wieland-Gumlich aldehyde. This chain is 18-hydroxynorfluorocurarine reductase, found in Strychnos sp.